Here is a 161-residue protein sequence, read N- to C-terminus: ATP synthase subunit b (161 aa).

Residues 10–29 traverse the membrane as a helical segment; sequence SVIQLMSFFLLLYILKKFLY.

This sequence belongs to the ATPase B chain family. In terms of assembly, F-type ATPases have 2 components, F(1) - the catalytic core - and F(0) - the membrane proton channel. F(1) has five subunits: alpha(3), beta(3), gamma(1), delta(1), epsilon(1). F(0) has three main subunits: a(1), b(2) and c(10-14). The alpha and beta chains form an alternating ring which encloses part of the gamma chain. F(1) is attached to F(0) by a central stalk formed by the gamma and epsilon chains, while a peripheral stalk is formed by the delta and b chains.

The protein resides in the cell inner membrane. In terms of biological role, f(1)F(0) ATP synthase produces ATP from ADP in the presence of a proton or sodium gradient. F-type ATPases consist of two structural domains, F(1) containing the extramembraneous catalytic core and F(0) containing the membrane proton channel, linked together by a central stalk and a peripheral stalk. During catalysis, ATP synthesis in the catalytic domain of F(1) is coupled via a rotary mechanism of the central stalk subunits to proton translocation. Functionally, component of the F(0) channel, it forms part of the peripheral stalk, linking F(1) to F(0). This chain is ATP synthase subunit b, found in Thermosipho melanesiensis (strain DSM 12029 / CIP 104789 / BI429).